Here is a 165-residue protein sequence, read N- to C-terminus: Protein SprT (165 aa).

Residues 20–163 (EKLAQANLKL…RCVHCGEQLV (144 aa)) enclose the SprT-like domain. H78 lines the Zn(2+) pocket. Residue E79 is part of the active site. Position 82 (H82) interacts with Zn(2+).

It belongs to the SprT family. It depends on Zn(2+) as a cofactor.

Its subcellular location is the cytoplasm. The chain is Protein SprT from Shigella flexneri serotype 5b (strain 8401).